The following is a 667-amino-acid chain: DNA ligase (667 aa).

NAD(+)-binding positions include 34–38, 83–84, and Glu114; these read DQEYD and SL. The N6-AMP-lysine intermediate role is filled by Lys116. Residues Arg137, Glu170, Lys286, and Lys310 each coordinate NAD(+). Residues Cys404, Cys407, Cys422, and Cys427 each contribute to the Zn(2+) site. A BRCT domain is found at 588–667; sequence HLAQKFENYR…EFQQLLSKED (80 aa).

The protein belongs to the NAD-dependent DNA ligase family. LigA subfamily. Mg(2+) serves as cofactor. It depends on Mn(2+) as a cofactor.

It carries out the reaction NAD(+) + (deoxyribonucleotide)n-3'-hydroxyl + 5'-phospho-(deoxyribonucleotide)m = (deoxyribonucleotide)n+m + AMP + beta-nicotinamide D-nucleotide.. Its function is as follows. DNA ligase that catalyzes the formation of phosphodiester linkages between 5'-phosphoryl and 3'-hydroxyl groups in double-stranded DNA using NAD as a coenzyme and as the energy source for the reaction. It is essential for DNA replication and repair of damaged DNA. This Spiroplasma citri protein is DNA ligase.